Here is a 548-residue protein sequence, read N- to C-terminus: uncharacterized protein (548 aa).

Positions 8 to 200 constitute a DhaL domain; that stretch reads KLFADMIIQG…LLCVYEGFLK (193 aa).

This is an uncharacterized protein from Staphylococcus aureus (strain NCTC 8325 / PS 47).